A 452-amino-acid polypeptide reads, in one-letter code: uncharacterized protein (452 aa).

A run of 7 helical transmembrane segments spans residues P18–K38, L81–A101, I269–I289, A317–I337, V354–F374, V390–I410, and S428–V448.

Belongs to the auxin efflux carrier (TC 2.A.69) family.

It localises to the membrane. This is an uncharacterized protein from Schizosaccharomyces pombe (strain 972 / ATCC 24843) (Fission yeast).